Reading from the N-terminus, the 427-residue chain is GTPase Obg (427 aa).

The Obg domain occupies 1–158 (MFVDKVKVYV…RDVILELKVL (158 aa)). Residues 118–144 (KGGRGGRGNTRFATPANPAPELSENGE) form a disordered region. An OBG-type G domain is found at 159 to 329 (ADAGLVGFPS…LLRAIMDTIE (171 aa)). Residues 165–172 (GFPSVGKS), 190–194 (FTTIT), 212–215 (DLPG), 282–285 (NKMD), and 310–312 (SAL) each bind GTP. Mg(2+)-binding residues include S172 and T192. Residues 349 to 427 (KHDKEQDPFV…LLEFEFEFIE (79 aa)) enclose the OCT domain.

Belongs to the TRAFAC class OBG-HflX-like GTPase superfamily. OBG GTPase family. As to quaternary structure, monomer. The cofactor is Mg(2+).

It localises to the cytoplasm. In terms of biological role, an essential GTPase which binds GTP, GDP and possibly (p)ppGpp with moderate affinity, with high nucleotide exchange rates and a fairly low GTP hydrolysis rate. Plays a role in control of the cell cycle, stress response, ribosome biogenesis and in those bacteria that undergo differentiation, in morphogenesis control. The protein is GTPase Obg of Halalkalibacterium halodurans (strain ATCC BAA-125 / DSM 18197 / FERM 7344 / JCM 9153 / C-125) (Bacillus halodurans).